The sequence spans 542 residues: Chaperonin GroEL 1 (542 aa).

Residues 29–32 (TLGP), 86–90 (DGTTT), G413, 477–479 (NAA), and D493 contribute to the ATP site.

It belongs to the chaperonin (HSP60) family. Forms a cylinder of 14 subunits composed of two heptameric rings stacked back-to-back. Interacts with the co-chaperonin GroES.

The protein resides in the cytoplasm. The enzyme catalyses ATP + H2O + a folded polypeptide = ADP + phosphate + an unfolded polypeptide.. Together with its co-chaperonin GroES, plays an essential role in assisting protein folding. The GroEL-GroES system forms a nano-cage that allows encapsulation of the non-native substrate proteins and provides a physical environment optimized to promote and accelerate protein folding. This Renibacterium salmoninarum (strain ATCC 33209 / DSM 20767 / JCM 11484 / NBRC 15589 / NCIMB 2235) protein is Chaperonin GroEL 1.